The primary structure comprises 535 residues: Serine/threonine-protein kinase C (535 aa).

One can recognise a Protein kinase domain in the interval 12-277; sequence YRIIETLGRG…AMAQTLQGNF (266 aa). ATP contacts are provided by residues 18–26 and lysine 43; that span reads LGRGGFGET. Aspartate 142 functions as the Proton acceptor in the catalytic mechanism. Residues 371–535 are disordered; that stretch reads NNPPPAVEEP…GEKPIDPEQN (165 aa). Over residues 402–421 the composition is skewed to pro residues; sequence SPIPTPATPSPEPTPSPSPS. Residues 422 to 435 show a composition bias toward low complexity; it reads PETTSSPTEDTITP. 2 stretches are compositionally biased toward pro residues: residues 446-464 and 472-498; these read APIP…PQPS and TPAP…PTPQ.

This sequence belongs to the protein kinase superfamily. Ser/Thr protein kinase family.

It carries out the reaction L-seryl-[protein] + ATP = O-phospho-L-seryl-[protein] + ADP + H(+). The catalysed reaction is L-threonyl-[protein] + ATP = O-phospho-L-threonyl-[protein] + ADP + H(+). The chain is Serine/threonine-protein kinase C (spkC) from Synechocystis sp. (strain ATCC 27184 / PCC 6803 / Kazusa).